A 301-amino-acid polypeptide reads, in one-letter code: Prestalk A differentiation protein A (301 aa).

This sequence belongs to the NmrA-type oxidoreductase family.

In terms of biological role, involved in development and cell differentiation. This Dictyostelium discoideum (Social amoeba) protein is Prestalk A differentiation protein A (padA).